A 436-amino-acid chain; its full sequence is MANVVVIGAQWGDEGKGKITDLLSRSADVVVRYQGGVNAGHTIVVDDKVLKLHLIPSGILYKNTSCLIGSGTVVDPKILLKEIDMLIDNGIDISGLKISSTSHVTMPYHRILDEAMEADRGSNKIGTTGRGIGPTYADKSQRNGIRIRDLLNKERLSDVIEIPLREKNGLLEKIYGIKPLKLEDIVEEYLDYGERLSKHVVDCTRTIHAASKNKKNILFEGAQGTLLDLDHGTYPFVTSSNPISGGACIGAGVGPTLIDRVIGVAKAYTTRVGEGPFPTELQGSINDQLCDRGSEFGTTTGRRRRCGWFDGVIGKYAVSVNGLDCLAVTKLDVLDELDEIQVCIAYDLDGEKIDYFPTNSDELKKCKPIFKKLKGWQCSTADCRKLSDLPENAMNYLRFLAELMEVPIAIVSLGANRDQTIVIEDPIHGPKRALLR.

Residues 12–18 (GDEGKGK) and 40–42 (GHT) contribute to the GTP site. Catalysis depends on aspartate 13, which acts as the Proton acceptor. Residues aspartate 13 and glycine 40 each contribute to the Mg(2+) site. IMP contacts are provided by residues 13–16 (DEGK), 38–41 (NAGH), threonine 128, arginine 142, glutamine 223, threonine 238, and arginine 302. The Proton donor role is filled by histidine 41. A substrate-binding site is contributed by 298 to 304 (TTTGRRR). Residues arginine 304, 330 to 332 (KLD), and 412 to 414 (SLG) contribute to the GTP site.

This sequence belongs to the adenylosuccinate synthetase family. Homodimer. Mg(2+) is required as a cofactor.

It localises to the cytoplasm. It catalyses the reaction IMP + L-aspartate + GTP = N(6)-(1,2-dicarboxyethyl)-AMP + GDP + phosphate + 2 H(+). Its pathway is purine metabolism; AMP biosynthesis via de novo pathway; AMP from IMP: step 1/2. Its function is as follows. Plays an important role in the de novo pathway of purine nucleotide biosynthesis. Catalyzes the first committed step in the biosynthesis of AMP from IMP. The polypeptide is Adenylosuccinate synthetase (Prochlorococcus marinus (strain MIT 9301)).